We begin with the raw amino-acid sequence, 1362 residues long: ATP-dependent RNA helicase dhx29 (1362 aa).

Basic residues predominate over residues 1-10 (MGGKNKKNRH). A disordered region spans residues 1–76 (MGGKNKKNRH…FASSSDSGVS (76 aa)). Low complexity predominate over residues 18–27 (GATAAANRPR). Over residues 28–41 (AAAEPRPGGEDAAK) the composition is skewed to basic and acidic residues. The span at 66-76 (SFASSSDSGVS) shows a compositional bias: low complexity. A coiled-coil region spans residues 89–109 (EAKLEKRIISLINEHKKLNSN). Disordered regions lie at residues 182-215 (QRAR…LKGN) and 229-257 (EQGS…DPNE). Positions 231-242 (GSDDDDDDDDVK) are enriched in acidic residues. Residues 243–257 (EEEKETTLEKFDPNE) are compositionally biased toward basic and acidic residues. A coiled-coil region spans residues 285-305 (QKEAQERIRGYQQEMKSLEDH). The disordered stretch occupies residues 317–336 (VKSESKQPKPALPPSEDEPL). Positions 576-749 (LETLKRHRVI…FTHCPIIRIS (174 aa)) constitute a Helicase ATP-binding domain. 589-596 (GETGSGKS) contributes to the ATP binding site. Positions 696 to 699 (DEVH) match the DEAH box motif. One can recognise a Helicase C-terminal domain in the interval 852-1021 (DISPEYRNVE…ELCLHIMKCD (170 aa)).

The protein belongs to the DEAD box helicase family. DEAH subfamily. As to quaternary structure, part of the 43S pre-initiation complex (PIC).

The protein resides in the cytoplasm. The enzyme catalyses ATP + H2O = ADP + phosphate + H(+). ATP-binding RNA helicase involved in translation initiation. Part of the 43S pre-initiation complex that is required for efficient initiation on mRNAs of higher eukaryotes with structured 5'-UTRs by promoting efficient NTPase-dependent 48S complex formation. Specifically binds to the 40S ribosome near the mRNA entrance. Does not possess a processive helicase activity. The protein is ATP-dependent RNA helicase dhx29 of Xenopus laevis (African clawed frog).